Here is a 270-residue protein sequence, read N- to C-terminus: Tryptophan synthase alpha chain (270 aa).

Residues Glu49 and Asp60 each act as proton acceptor in the active site.

It belongs to the TrpA family. As to quaternary structure, tetramer of two alpha and two beta chains.

It carries out the reaction (1S,2R)-1-C-(indol-3-yl)glycerol 3-phosphate + L-serine = D-glyceraldehyde 3-phosphate + L-tryptophan + H2O. It functions in the pathway amino-acid biosynthesis; L-tryptophan biosynthesis; L-tryptophan from chorismate: step 5/5. In terms of biological role, the alpha subunit is responsible for the aldol cleavage of indoleglycerol phosphate to indole and glyceraldehyde 3-phosphate. The polypeptide is Tryptophan synthase alpha chain (Thermobifida fusca (strain YX)).